A 336-amino-acid chain; its full sequence is Ferrochelatase (336 aa).

Residues histidine 206 and glutamate 287 each coordinate Fe cation.

Belongs to the ferrochelatase family.

The protein localises to the cytoplasm. It carries out the reaction heme b + 2 H(+) = protoporphyrin IX + Fe(2+). The protein operates within porphyrin-containing compound metabolism; protoheme biosynthesis; protoheme from protoporphyrin-IX: step 1/1. Functionally, catalyzes the ferrous insertion into protoporphyrin IX. This is Ferrochelatase from Neisseria meningitidis serogroup C / serotype 2a (strain ATCC 700532 / DSM 15464 / FAM18).